We begin with the raw amino-acid sequence, 381 residues long: MYINYLKDLIGFKSVTPESDGAIEYIDDLLKQHGFKTEIKIFGDSKSEQATNLYAVFGSNEPNICFVGHVDVVPAGNHELWHNASPFKASHQDGKIYGRGAVDMKGAIACFLAASLDFIKNNTGFKGSISFLLTSDEEGKAKHGTKEMLQYIYDQGHKMDFAIVGEPTCEKEIGDTIKIGRRGSVNFKLNIEGLSGHVAYPHKANNPLPCLIKILNELTNIRLDKGTEFFQSSNLEVTNIDVGNNTSNVIPASTEASFNIRFNNLHSAETLAKQVEEIIKRYCKEYKVDYKLEYSSSADSFIQNPNDKIKDFADIVERVLKIKPEFSTSGGTSDARFVKDYCPLVEFGLLSETAHKINEYTKISDLQKLYDVYYNFLMEIL.

His-69 provides a ligand contact to Zn(2+). The active site involves Asp-71. Asp-103 serves as a coordination point for Zn(2+). Catalysis depends on Glu-137, which acts as the Proton acceptor. Residues Glu-138, Glu-166, and His-355 each coordinate Zn(2+).

Belongs to the peptidase M20A family. DapE subfamily. Homodimer. Requires Zn(2+) as cofactor. Co(2+) is required as a cofactor.

The enzyme catalyses N-succinyl-(2S,6S)-2,6-diaminopimelate + H2O = (2S,6S)-2,6-diaminopimelate + succinate. The protein operates within amino-acid biosynthesis; L-lysine biosynthesis via DAP pathway; LL-2,6-diaminopimelate from (S)-tetrahydrodipicolinate (succinylase route): step 3/3. Functionally, catalyzes the hydrolysis of N-succinyl-L,L-diaminopimelic acid (SDAP), forming succinate and LL-2,6-diaminopimelate (DAP), an intermediate involved in the bacterial biosynthesis of lysine and meso-diaminopimelic acid, an essential component of bacterial cell walls. This is Succinyl-diaminopimelate desuccinylase from Rickettsia felis (strain ATCC VR-1525 / URRWXCal2) (Rickettsia azadi).